Here is a 378-residue protein sequence, read N- to C-terminus: Flagellar motor switch phosphatase FliY (378 aa).

The disordered stretch occupies residues 225–271 (ESAEEEETVQPEVTYEQPKEPVTPEPRIEPKQQQQPPKRQGTAKKAA). The segment covering 255–264 (KQQQQPPKRQ) has biased composition (low complexity).

The protein belongs to the FliN/MopA/SpaO family.

It localises to the cell membrane. Component of the flagellar switch. Binds CheY-P and increases its hydrolysis rate in vitro. May function constitutively to remove CheY-P around the flagellar switch to maintain an optimal level of CheY-P whereas CheC may function after addition of an attractant to cope with increased levels of CheY-P. The protein is Flagellar motor switch phosphatase FliY (fliY) of Bacillus subtilis (strain 168).